The primary structure comprises 411 residues: MFHPRARTMLLLSLPALIIGVASSLVLIAAMKIASVFQQFLWQRLPASIGIAYDSPFWIVGMLTLTGIVVGLIIRYSPGHAGPDPAIEPLISMPVSPSALPGLLLALIIGLAGGVSLGPEHPIMTINIALAAAFGSRLFPRITALDWTILASAGTIGALFGTPVAAALIFSQTLSGSNDIPMWDRLFAPLMAAAAGSLTTSLFFHPHFSLPIAHYTQMRLVDIASGAIVAAIAIAAGMVAVWCLPRLHELLHRLKNPVLILGIGGFILGILGVIGGPLTLFKGLDEMQQMAFSQTLGAGDYFTLAVVKLAALVIAAASGFRGGRIFPAVFIGAALGLMLHAHVEAVPAAITVSCAILGLVLVVTRDGWLSLFMAAVVVPDTNLLPLLCIVMLPAWLLLAGKPLLAANRHEP.

The next 11 membrane-spanning stretches (helical) occupy residues methionine 9 to alanine 29, aspartate 54 to isoleucine 74, alanine 99 to proline 119, isoleucine 149 to isoleucine 169, leucine 186 to proline 206, isoleucine 223 to cysteine 243, valine 258 to leucine 278, leucine 296 to alanine 316, glycine 322 to histidine 342, valine 343 to valine 363, and leucine 386 to alanine 406.

Belongs to the chloride channel (TC 2.A.49) family.

Its subcellular location is the cell membrane. This Salmonella paratyphi A (strain ATCC 9150 / SARB42) protein is Putative ion-transport protein YfeO.